A 348-amino-acid polypeptide reads, in one-letter code: NADH-quinone oxidoreductase subunit H (348 aa).

8 consecutive transmembrane segments (helical) span residues 10 to 30 (LPLF…LVLI), 82 to 102 (GVFL…WAVV), 115 to 135 (VGLL…IMGG), 161 to 181 (IGFV…TTIV), 199 to 219 (LLDW…ISAL), 251 to 271 (LFFL…TILF), 287 to 307 (VPGV…FAMV), and 322 to 342 (LGWK…AAIL).

The protein belongs to the complex I subunit 1 family. NDH-1 is composed of 14 different subunits. Subunits NuoA, H, J, K, L, M, N constitute the membrane sector of the complex.

It is found in the cell inner membrane. It catalyses the reaction a quinone + NADH + 5 H(+)(in) = a quinol + NAD(+) + 4 H(+)(out). Functionally, NDH-1 shuttles electrons from NADH, via FMN and iron-sulfur (Fe-S) centers, to quinones in the respiratory chain. The immediate electron acceptor for the enzyme in this species is believed to be ubiquinone. Couples the redox reaction to proton translocation (for every two electrons transferred, four hydrogen ions are translocated across the cytoplasmic membrane), and thus conserves the redox energy in a proton gradient. This subunit may bind ubiquinone. This is NADH-quinone oxidoreductase subunit H from Bartonella bacilliformis (strain ATCC 35685 / KC583 / Herrer 020/F12,63).